Consider the following 516-residue polypeptide: Golgin-84 (516 aa).

The Cytoplasmic segment spans residues 1–492 (MSSWITGLAD…TFLRRYPMMR (492 aa)). Residues 28–80 (QTENATGSADPMRRSMTSSTQSLSTSLKSTLSPVRRSGANSSSSVKSDGGVSV) are disordered. Low complexity predominate over residues 42-80 (SMTSSTQSLSTSLKSTLSPVRRSGANSSSSVKSDGGVSV). Serine 64 and serine 74 each carry phosphoserine. Residues 108–423 (TNELAAFKIA…KAQTQLQQNM (316 aa)) are a coiled coil. Residues 493 to 513 (VSVIVYVALLHLWVMFVLLST) form a helical; Anchor for type IV membrane protein membrane-spanning segment. At 514–516 (TPN) the chain is on the lumenal side.

It localises to the golgi apparatus membrane. In terms of biological role, may be involved in maintaining Golgi structure and in intra-Golgi transport. This Drosophila melanogaster (Fruit fly) protein is Golgin-84 (Golgin84).